Consider the following 184-residue polypeptide: Elongation factor P (184 aa).

This sequence belongs to the elongation factor P family.

It localises to the cytoplasm. It participates in protein biosynthesis; polypeptide chain elongation. Its function is as follows. Involved in peptide bond synthesis. Stimulates efficient translation and peptide-bond synthesis on native or reconstituted 70S ribosomes in vitro. Probably functions indirectly by altering the affinity of the ribosome for aminoacyl-tRNA, thus increasing their reactivity as acceptors for peptidyl transferase. The polypeptide is Elongation factor P (Acidovorax ebreus (strain TPSY) (Diaphorobacter sp. (strain TPSY))).